Here is a 187-residue protein sequence, read N- to C-terminus: Pyridoxal 5'-phosphate synthase subunit PdxT (187 aa).

Position 47 to 49 (47 to 49) interacts with L-glutamine; sequence GES. C76 (nucleophile) is an active-site residue. Residues R102 and 128–129 each bind L-glutamine; that span reads IR. Active-site charge relay system residues include H165 and E167.

The protein belongs to the glutaminase PdxT/SNO family. In the presence of PdxS, forms a dodecamer of heterodimers. Only shows activity in the heterodimer.

The enzyme catalyses aldehydo-D-ribose 5-phosphate + D-glyceraldehyde 3-phosphate + L-glutamine = pyridoxal 5'-phosphate + L-glutamate + phosphate + 3 H2O + H(+). It catalyses the reaction L-glutamine + H2O = L-glutamate + NH4(+). It functions in the pathway cofactor biosynthesis; pyridoxal 5'-phosphate biosynthesis. Catalyzes the hydrolysis of glutamine to glutamate and ammonia as part of the biosynthesis of pyridoxal 5'-phosphate. The resulting ammonia molecule is channeled to the active site of PdxS. This Methanococcus maripaludis (strain DSM 14266 / JCM 13030 / NBRC 101832 / S2 / LL) protein is Pyridoxal 5'-phosphate synthase subunit PdxT.